The sequence spans 186 residues: ADP-ribosylation factor-like protein 8B (186 aa).

The segment at residues 1-19 is an intramembrane region (note=Mediates targeting to membranes); that stretch reads MLALISRLLDWFRSLFWKE. GTP-binding positions include 29–35, 71–75, and 130–133; these read QYSGKTT, DIGGQ, and NKRD. K141 participates in a covalent cross-link: Glycyl lysine isopeptide (Lys-Gly) (interchain with G-Cter in ubiquitin).

The protein belongs to the small GTPase superfamily. Arf family. Interacts with tubulin. Interacts with BORCS5; recruits ARL8B to lysosomes. Interacts with VPS41; the interaction mediates the recruitment of the HOPS complex to lysosomes. Interacts (GTP-bound form) with PLEKHM2 (via RUN domain); the interaction is required to recruit the motor protein kinesin-1 on lysosomes. Interacts (GTP-bound form) with PLEKHM1 (via RUN domain); the interaction is required for PLEKHM1 localization to lysosomes and for ARL8B function in delivery and degradation of endocytic and autophagic cargo in lysosomes. PLEKHM1 and PLEKHM2 compete for interaction with ARL8B. Interacts (GTP-bound form) with RUFY1; the interaction is required for RUFY1 endosomal location. When GTP-bound, interacts with RUFY3 and RUFY4, but not with RUFY1, nor RUFY2. Post-translationally, ubiquitinated at Lys-141 by RNF167, leading to its degradation.

The protein resides in the late endosome membrane. It localises to the lysosome membrane. The protein localises to the cytoplasm. Its subcellular location is the cytoskeleton. It is found in the spindle. The protein resides in the cell projection. It localises to the axon. The protein localises to the synapse. Its subcellular location is the cytolytic granule membrane. It is found in the early endosome membrane. The enzyme catalyses GTP + H2O = GDP + phosphate + H(+). Functionally, small GTPase which cycles between active GTP-bound and inactive GDP-bound states. In its active state, binds to a variety of effector proteins playing a key role in the regulation of lysosomal positioning which is important for nutrient sensing, natural killer cell-mediated cytotoxicity and antigen presentation. Along with its effectors, orchestrates lysosomal transport and fusion. Localizes specifically to lysosomal membranes and mediates anterograde lysosomal motility by recruiting PLEKHM2, which in turn recruits the motor protein kinesin-1 on lysosomes. Required for lysosomal and cytolytic granule exocytosis. Critical factor involved in NK cell-mediated cytotoxicity. Drives the polarization of cytolytic granules and microtubule-organizing centers (MTOCs) toward the immune synapse between effector NK lymphocytes and target cells. In neurons, mediates the anterograde axonal long-range transport of presynaptic lysosome-related vesicles required for presynaptic biogenesis and synaptic function. Also acts as a regulator of endosome to lysosome trafficking pathways of special significance for host defense. Recruits RUFY1 onto early endosomes regulating endosomes to trans-Golgi network proteins retrieval. Regulates cargo trafficking to lysosomes by binding to PLEKHM1 and recruiting the HOPS subunit VPS41, resulting in functional assembly of the HOPS complex on lysosomal membranes. Plays an important role in cargo delivery to lysosomes for antigen presentation and microbial killing. Directs the intersection of CD1d with lipid antigens in lysosomes, and plays a role in intersecting phagosomes with lysosomes to generate phagolysosomes that kill microbes. Involved in the process of MHC II presentation. Regulates the delivery of antigens to lysosomes and the formation of MHC II-peptide complexes through the recruitment of the HOPS complex to lysosomes allowing the fusion of late endosomes to lysosomes. May play a role in chromosome segregation. The polypeptide is ADP-ribosylation factor-like protein 8B (ARL8B) (Macaca fascicularis (Crab-eating macaque)).